The primary structure comprises 365 residues: Cobalt-precorrin-5B C(1)-methyltransferase (365 aa).

The protein belongs to the CbiD family.

The catalysed reaction is Co-precorrin-5B + S-adenosyl-L-methionine = Co-precorrin-6A + S-adenosyl-L-homocysteine. Its pathway is cofactor biosynthesis; adenosylcobalamin biosynthesis; cob(II)yrinate a,c-diamide from sirohydrochlorin (anaerobic route): step 6/10. Functionally, catalyzes the methylation of C-1 in cobalt-precorrin-5B to form cobalt-precorrin-6A. This chain is Cobalt-precorrin-5B C(1)-methyltransferase, found in Pseudomonas fluorescens (strain ATCC BAA-477 / NRRL B-23932 / Pf-5).